Reading from the N-terminus, the 579-residue chain is Sulfite reductase [NADPH] hemoprotein beta-component (579 aa).

Cysteine 434, cysteine 440, cysteine 479, and cysteine 483 together coordinate [4Fe-4S] cluster. Siroheme is bound at residue cysteine 483.

This sequence belongs to the nitrite and sulfite reductase 4Fe-4S domain family. As to quaternary structure, alpha(8)-beta(8). The alpha component is a flavoprotein, the beta component is a hemoprotein. Siroheme serves as cofactor. [4Fe-4S] cluster is required as a cofactor.

The catalysed reaction is hydrogen sulfide + 3 NADP(+) + 3 H2O = sulfite + 3 NADPH + 4 H(+). It participates in sulfur metabolism; hydrogen sulfide biosynthesis; hydrogen sulfide from sulfite (NADPH route): step 1/1. Component of the sulfite reductase complex that catalyzes the 6-electron reduction of sulfite to sulfide. This is one of several activities required for the biosynthesis of L-cysteine from sulfate. This chain is Sulfite reductase [NADPH] hemoprotein beta-component, found in Salmonella choleraesuis (strain SC-B67).